We begin with the raw amino-acid sequence, 473 residues long: Eukaryotic translation initiation factor 2 subunit gamma (473 aa).

The 211-residue stretch at 40-250 (QATINIGTIG…AICNIAPPNY (211 aa)) folds into the tr-type G domain. The tract at residues 49-56 (GHVAHGKS) is G1. 52 to 57 (AHGKSS) contacts GTP. Residues 77–81 (NITIK) form a G2 region. A G3 region spans residues 135-138 (DCPG). GTP-binding positions include 193 to 196 (NKMD) and 228 to 230 (SAQ). The interval 193-196 (NKMD) is G4. The segment at 228–230 (SAQ) is G5. Residues 458 to 470 (GKVRSGGTLCEVV) are interacts with CDC123.

This sequence belongs to the TRAFAC class translation factor GTPase superfamily. Classic translation factor GTPase family. EIF2G subfamily. In terms of assembly, eukaryotic translation initiation factor 2 eIF2 is a heterotrimeric complex composed of an alpha, a beta and a gamma subunit. The factors eIF-1, eIF-2, eIF-3, TIF5/eIF-5 and methionyl-tRNAi form a multifactor complex (MFC) that may bind to the 40S ribosome.

It is found in the cytoplasm. It localises to the cytosol. The enzyme catalyses GTP + H2O = GDP + phosphate + H(+). In terms of biological role, as a subunit of eukaryotic initiation factor 2 eIF2, involved in the early steps of protein synthesis. In the presence of GTP, eIF-2 forms a ternary complex with initiator tRNA Met-tRNAi and then recruits the 40S ribosomal complex and initiation factors eIF-1, eIF-1A and eIF-3 to form the 43S pre-initiation complex (43S PIC), a step that determines the rate of protein translation. The 43S PIC binds to mRNA and scans downstream to the initiation codon, where it forms a 48S initiation complex by codon-anticodon base pairing. This leads to the displacement of eIF-1 to allow GTPase-activating protein (GAP) eIF-5-mediated hydrolysis of eIF2-bound GTP. Hydrolysis of GTP and release of Pi, which makes GTP hydrolysis irreversible, causes the release of the eIF-2-GDP binary complex from the 40S subunit, an event that is essential for the subsequent joining of the 60S ribosomal subunit to form an elongation-competent 80S ribosome. In order for eIF-2 to recycle and catalyze another round of initiation, the GDP bound to eIF-2 must be exchanged with GTP by way of a reaction catalyzed by GDP-GTP exchange factor (GEF) eIF-2B. This Cryptococcus neoformans var. grubii serotype A (strain H99 / ATCC 208821 / CBS 10515 / FGSC 9487) (Filobasidiella neoformans var. grubii) protein is Eukaryotic translation initiation factor 2 subunit gamma.